The sequence spans 249 residues: 5'-nucleotidase SurE (249 aa).

Residues Asp9, Asp10, Ser40, and Asn92 each coordinate a divalent metal cation.

Belongs to the SurE nucleotidase family. It depends on a divalent metal cation as a cofactor.

It is found in the cytoplasm. The enzyme catalyses a ribonucleoside 5'-phosphate + H2O = a ribonucleoside + phosphate. In terms of biological role, nucleotidase that shows phosphatase activity on nucleoside 5'-monophosphates. In Shewanella loihica (strain ATCC BAA-1088 / PV-4), this protein is 5'-nucleotidase SurE.